Reading from the N-terminus, the 537-residue chain is Probable alpha-galactosidase A (537 aa).

A signal peptide spans 1-23 (MNQGTKSILLAATLAAIPWQVYG). Cys46 and Cys78 are disulfide-bonded. N-linked (GlcNAc...) asparagine glycans are attached at residues Asn49, Asn87, Asn93, and Asn123. The cysteines at positions 126 and 156 are disulfide-linked. Asp154 (nucleophile) is an active-site residue. Asn203 is a glycosylation site (N-linked (GlcNAc...) asparagine). Asp212 serves as the catalytic Proton donor. 2 N-linked (GlcNAc...) asparagine glycosylation sites follow: Asn355 and Asn436. Residues 413 to 537 (CSSVVPTGLV…FGLPSGVQLS (125 aa)) enclose the Ricin B-type lectin domain. 2 disulfides stabilise this stretch: Cys430–Cys444 and Cys469–Cys482. Asn491 carries N-linked (GlcNAc...) asparagine glycosylation.

Belongs to the glycosyl hydrolase 27 family.

It is found in the secreted. It carries out the reaction Hydrolysis of terminal, non-reducing alpha-D-galactose residues in alpha-D-galactosides, including galactose oligosaccharides, galactomannans and galactolipids.. Hydrolyzes a variety of simple alpha-D-galactoside as well as more complex molecules such as oligosaccharides and polysaccharides. The protein is Probable alpha-galactosidase A (aglA) of Aspergillus niger (strain ATCC MYA-4892 / CBS 513.88 / FGSC A1513).